The chain runs to 477 residues: Metallopeptidase AprA (477 aa).

Residues methionine 1–serine 20 form the signal peptide. Position 183 (histidine 183) interacts with Zn(2+). Residue glutamate 184 is part of the active site. Positions 187 and 193 each coordinate Zn(2+). Arginine 264, glycine 266, threonine 268, aspartate 296, glycine 298, glycine 299, aspartate 301, threonine 338, glutamate 340, glycine 345, glycine 347, aspartate 349, asparagine 354, alanine 356, asparagine 358, glycine 362, glycine 363, alanine 364, glycine 365, aspartate 367, glycine 371, alanine 372, glycine 373, glycine 374, aspartate 376, glycine 380, glycine 381, alanine 382, glycine 383, aspartate 385, aspartate 394, aspartate 401, aspartate 411, aspartate 453, serine 455, and aspartate 461 together coordinate Ca(2+). Hemolysin-type calcium-binding repeat units follow at residues phenylalanine 343 to isoleucine 360, lysine 361 to leucine 378, and tryptophan 379 to alanine 391.

The protein belongs to the peptidase M10B family. It depends on Ca(2+) as a cofactor. Zn(2+) is required as a cofactor.

Its subcellular location is the secreted. Its activity is regulated as follows. Is completely inhibited by the metal cation chelators 1,10-phenanthroline and EDTA, but PMSF, pepstatin A and E-64 have no effect on activity. Peptidase able to cleave azocasein and the milk substrates beta-casein and Na-caseinate. Can withstand UHT processing of milk, and is able to spoil UHT milk over the storage period. This Pseudomonas marginalis (Pseudomonas panacis) protein is Metallopeptidase AprA.